We begin with the raw amino-acid sequence, 216 residues long: Adenylate kinase (216 aa).

ATP is bound at residue 13–18 (GAGKGT). Residues 33 to 66 (TTGDALRANKDMDISDMDTEYDTPREYMEAGDLV) are NMP. Residues threonine 34, arginine 39, 64–66 (DLV), 89–92 (GYPR), and glutamine 96 contribute to the AMP site. The LID stretch occupies residues 125 to 162 (GRRVCDDCGTNYHVEFNQPEEDGVCDECGGDLIQRDDD). Arginine 126 is an ATP binding site. Cysteine 129, cysteine 132, cysteine 149, and cysteine 152 together coordinate Zn(2+). AMP contacts are provided by arginine 159 and arginine 170. Position 198 (glutamine 198) interacts with ATP.

Belongs to the adenylate kinase family. In terms of assembly, monomer.

It is found in the cytoplasm. The catalysed reaction is AMP + ATP = 2 ADP. Its pathway is purine metabolism; AMP biosynthesis via salvage pathway; AMP from ADP: step 1/1. Functionally, catalyzes the reversible transfer of the terminal phosphate group between ATP and AMP. Plays an important role in cellular energy homeostasis and in adenine nucleotide metabolism. In Haloarcula marismortui (strain ATCC 43049 / DSM 3752 / JCM 8966 / VKM B-1809) (Halobacterium marismortui), this protein is Adenylate kinase.